The following is a 245-amino-acid chain: tRNA (guanine-N(1)-)-methyltransferase (245 aa).

Residues Gly-111 and 131–136 (MGDYVL) contribute to the S-adenosyl-L-methionine site.

This sequence belongs to the RNA methyltransferase TrmD family. As to quaternary structure, homodimer.

Its subcellular location is the cytoplasm. It carries out the reaction guanosine(37) in tRNA + S-adenosyl-L-methionine = N(1)-methylguanosine(37) in tRNA + S-adenosyl-L-homocysteine + H(+). Functionally, specifically methylates guanosine-37 in various tRNAs. This is tRNA (guanine-N(1)-)-methyltransferase from Staphylococcus aureus (strain USA300).